A 203-amino-acid chain; its full sequence is Small ribosomal subunit protein uS7A (203 aa).

The protein belongs to the universal ribosomal protein uS7 family. Component of the small ribosomal subunit (SSU). Mature yeast ribosomes consist of a small (40S) and a large (60S) subunit. The 40S small subunit contains 1 molecule of ribosomal RNA (18S rRNA) and at least 33 different proteins. The large 60S subunit contains 3 rRNA molecules (25S, 5.8S and 5S rRNA) and at least 46 different proteins.

The protein localises to the cytoplasm. The protein resides in the nucleus. It is found in the nucleolus. Its function is as follows. Component of the ribosome, a large ribonucleoprotein complex responsible for the synthesis of proteins in the cell. The small ribosomal subunit (SSU) binds messenger RNAs (mRNAs) and translates the encoded message by selecting cognate aminoacyl-transfer RNA (tRNA) molecules. The large subunit (LSU) contains the ribosomal catalytic site termed the peptidyl transferase center (PTC), which catalyzes the formation of peptide bonds, thereby polymerizing the amino acids delivered by tRNAs into a polypeptide chain. The nascent polypeptides leave the ribosome through a tunnel in the LSU and interact with protein factors that function in enzymatic processing, targeting, and the membrane insertion of nascent chains at the exit of the ribosomal tunnel. This Schizosaccharomyces pombe (strain 972 / ATCC 24843) (Fission yeast) protein is Small ribosomal subunit protein uS7A (rps5).